Here is a 507-residue protein sequence, read N- to C-terminus: Histidine ammonia-lyase (507 aa).

The segment at residues 141–143 (ASG) is a cross-link (5-imidazolinone (Ala-Gly)). The residue at position 142 (Ser-142) is a 2,3-didehydroalanine (Ser).

This sequence belongs to the PAL/histidase family. Contains an active site 4-methylidene-imidazol-5-one (MIO), which is formed autocatalytically by cyclization and dehydration of residues Ala-Ser-Gly.

It localises to the cytoplasm. It catalyses the reaction L-histidine = trans-urocanate + NH4(+). The protein operates within amino-acid degradation; L-histidine degradation into L-glutamate; N-formimidoyl-L-glutamate from L-histidine: step 1/3. In Cereibacter sphaeroides (strain ATCC 17023 / DSM 158 / JCM 6121 / CCUG 31486 / LMG 2827 / NBRC 12203 / NCIMB 8253 / ATH 2.4.1.) (Rhodobacter sphaeroides), this protein is Histidine ammonia-lyase.